Consider the following 212-residue polypeptide: Probable GH family 25 lysozyme 2 (212 aa).

Positions 1–19 (MRFIALLISFFALLKVISA) are cleaved as a signal peptide. Positions 20–212 (ISGVDISSAS…GLGFDLNWYP (193 aa)) constitute a Ch-type lysozyme domain. Catalysis depends on residues Asp24, Asp112, and Glu114.

Belongs to the glycosyl hydrolase 25 family.

It localises to the secreted. The catalysed reaction is Hydrolysis of (1-&gt;4)-beta-linkages between N-acetylmuramic acid and N-acetyl-D-glucosamine residues in a peptidoglycan and between N-acetyl-D-glucosamine residues in chitodextrins.. This Dictyostelium discoideum (Social amoeba) protein is Probable GH family 25 lysozyme 2.